The following is a 158-amino-acid chain: Ribosomal RNA large subunit methyltransferase H (158 aa).

S-adenosyl-L-methionine is bound by residues Leu72, Gly103, and 122–127 (LGNLTL).

This sequence belongs to the RNA methyltransferase RlmH family. In terms of assembly, homodimer.

It localises to the cytoplasm. It carries out the reaction pseudouridine(1915) in 23S rRNA + S-adenosyl-L-methionine = N(3)-methylpseudouridine(1915) in 23S rRNA + S-adenosyl-L-homocysteine + H(+). Its function is as follows. Specifically methylates the pseudouridine at position 1915 (m3Psi1915) in 23S rRNA. This chain is Ribosomal RNA large subunit methyltransferase H, found in Acidiphilium cryptum (strain JF-5).